The sequence spans 338 residues: GTPase Obg (338 aa).

An Obg domain is found at 1 to 159 (MKFLDKAIIH…RILRLELILI (159 aa)). An OBG-type G domain is found at 160 to 333 (AHVGTLGLPN…IVKKIYDFLK (174 aa)). Residues 166–173 (GLPNSGKS), 191–195 (FTTLK), 213–216 (DIPG), 283–286 (NKID), and 314–316 (SAI) contribute to the GTP site. Mg(2+) is bound by residues serine 173 and threonine 193.

Belongs to the TRAFAC class OBG-HflX-like GTPase superfamily. OBG GTPase family. As to quaternary structure, monomer. The cofactor is Mg(2+).

It localises to the cytoplasm. Functionally, an essential GTPase which binds GTP, GDP and possibly (p)ppGpp with moderate affinity, with high nucleotide exchange rates and a fairly low GTP hydrolysis rate. Plays a role in control of the cell cycle, stress response, ribosome biogenesis and in those bacteria that undergo differentiation, in morphogenesis control. The chain is GTPase Obg from Buchnera aphidicola subsp. Baizongia pistaciae (strain Bp).